The following is a 212-amino-acid chain: Synaptosomal-associated protein 25 (212 aa).

2 t-SNARE coiled-coil homology domains span residues 26-88 and 148-210; these read QGVA…LSGM and DARE…AHQL.

It belongs to the SNAP-25 family. Exclusively found in brain and ganglia.

The protein localises to the synapse. Its subcellular location is the synaptosome. Its function is as follows. May play an important role in the synaptic function of specific neuronal systems. Associates with proteins involved in vesicle docking and membrane fusion. This chain is Synaptosomal-associated protein 25 (Snap25), found in Drosophila melanogaster (Fruit fly).